Reading from the N-terminus, the 337-residue chain is F-box protein At2g27310 (337 aa).

In terms of domain architecture, F-box spans 10–58; it reads DSISTLHSDIIQTQILTRLDGPTLASTATTSSYLQTLCTEEKLWQELSI.

This Arabidopsis thaliana (Mouse-ear cress) protein is F-box protein At2g27310.